A 397-amino-acid chain; its full sequence is Acetyl-CoA acetyltransferase, cytosolic (397 aa).

Methionine 1 is subject to N-acetylmethionine. Cysteine 92 serves as the catalytic Acyl-thioester intermediate. Lysine 200 bears the N6-acetyllysine mark. CoA contacts are provided by arginine 223 and serine 226. Lysine 233 and lysine 235 each carry N6-acetyllysine. Residue serine 252 coordinates CoA. The active-site Proton donor/acceptor is the cysteine 383.

Belongs to the thiolase-like superfamily. Thiolase family. Homotetramer.

The protein localises to the cytoplasm. It is found in the cytosol. The enzyme catalyses 2 acetyl-CoA = acetoacetyl-CoA + CoA. Its pathway is lipid metabolism; fatty acid metabolism. Involved in the biosynthetic pathway of cholesterol. This Mus musculus (Mouse) protein is Acetyl-CoA acetyltransferase, cytosolic (Acat2).